Here is a 348-residue protein sequence, read N- to C-terminus: Phosphate acyltransferase (348 aa).

The protein belongs to the PlsX family. In terms of assembly, homodimer. Probably interacts with PlsY.

The protein localises to the cytoplasm. The catalysed reaction is a fatty acyl-[ACP] + phosphate = an acyl phosphate + holo-[ACP]. Its pathway is lipid metabolism; phospholipid metabolism. In terms of biological role, catalyzes the reversible formation of acyl-phosphate (acyl-PO(4)) from acyl-[acyl-carrier-protein] (acyl-ACP). This enzyme utilizes acyl-ACP as fatty acyl donor, but not acyl-CoA. The sequence is that of Phosphate acyltransferase from Synechocystis sp. (strain ATCC 27184 / PCC 6803 / Kazusa).